We begin with the raw amino-acid sequence, 414 residues long: Phthiocerol/phthiodiolone dimycocerosyl transferase (414 aa).

His-118 acts as the Proton acceptor in catalysis.

The protein belongs to the acyltransferase PapA5 family. In terms of assembly, monomer. Interacts directly with the acyl carrier protein (ACP) domain of the mycocerosic acid synthase (mas) protein.

It catalyses the reaction 2 a mycocerosyl-[mycocerosic acid synthase] + a phthiocerol = a dimycocerosyl phthiocerol + 2 holo-[mycocerosic acid synthase].. The enzyme catalyses 2 a mycocerosyl-[mycocerosic acid synthase] + a phthiodiolone = a dimycocerosyl phthiodiolone + 2 holo-[mycocerosic acid synthase].. It carries out the reaction 2 a mycocerosyl-[mycocerosic acid synthase] + a phenolphthiocerol = a dimycocerosyl phenolphthiocerol + 2 holo-[mycocerosic acid synthase].. Its function is as follows. Catalyzes diesterification of phthiocerol, phthiodiolone, and phenolphthiocerol with mycocerosic acids, the final step in the phthiocerol, phthiodiolone and phenolphthiocerol dimycocerosate esters (PDIM) synthesis. Can directly transfer the mycocerosate bound to the mycocerosic acid synthase (mas) onto the substrate alcohols. This chain is Phthiocerol/phthiodiolone dimycocerosyl transferase (papA5), found in Mycobacterium ulcerans (strain Agy99).